Reading from the N-terminus, the 235-residue chain is Cobalt transport protein CbiM (235 aa).

An N-terminal signal peptide occupies residues 1 to 33 (MRYLKFFLLLVFLVPSFGFSMHIMEGFLPPTHA). 6 consecutive transmembrane segments (helical) span residues 34–51 (LIWYILSLPFFVIGLFTI), 63–83 (MLLAFVGAFTFVLSAMKIPSV), 95–115 (LGAIIFGPFTMTVIGTIVLLF), 118–138 (LLLAHGGLTTLGANTFSMAIV), 156–176 (NIAVFLAAFLGDLFTYVTTSF), and 199–219 (IFAITQVPLAIIEGLVTVVVI).

The protein belongs to the CbiM family. As to quaternary structure, forms an energy-coupling factor (ECF) transporter complex composed of an ATP-binding protein (A component, CbiO), a transmembrane protein (T component, CbiQ) and 2 possible substrate-capture proteins (S components, CbiM and CbiN) of unknown stoichimetry.

The protein resides in the cell inner membrane. The protein operates within cofactor biosynthesis; adenosylcobalamin biosynthesis. Its function is as follows. Part of the energy-coupling factor (ECF) transporter complex CbiMNOQ involved in cobalt import. The sequence is that of Cobalt transport protein CbiM from Thermosipho melanesiensis (strain DSM 12029 / CIP 104789 / BI429).